Here is a 164-residue protein sequence, read N- to C-terminus: UPF0304 protein YfbU (164 aa).

Belongs to the UPF0304 family.

This Shigella flexneri protein is UPF0304 protein YfbU.